Consider the following 369-residue polypeptide: tRNA-specific 2-thiouridylase MnmA (369 aa).

Residues alanine 16–serine 23 and methionine 42 contribute to the ATP site. Cysteine 110 acts as the Nucleophile in catalysis. A disulfide bond links cysteine 110 and cysteine 206. Glycine 134 is an ATP binding site. The interval lysine 156–glutamine 158 is interaction with tRNA. The Cysteine persulfide intermediate role is filled by cysteine 206.

This sequence belongs to the MnmA/TRMU family.

Its subcellular location is the cytoplasm. It carries out the reaction S-sulfanyl-L-cysteinyl-[protein] + uridine(34) in tRNA + AH2 + ATP = 2-thiouridine(34) in tRNA + L-cysteinyl-[protein] + A + AMP + diphosphate + H(+). Catalyzes the 2-thiolation of uridine at the wobble position (U34) of tRNA, leading to the formation of s(2)U34. The chain is tRNA-specific 2-thiouridylase MnmA from Orientia tsutsugamushi (strain Boryong) (Rickettsia tsutsugamushi).